The chain runs to 208 residues: Small ribosomal subunit protein uS4 (208 aa).

The region spanning Arg98 to Lys163 is the S4 RNA-binding domain.

This sequence belongs to the universal ribosomal protein uS4 family. As to quaternary structure, part of the 30S ribosomal subunit. Contacts protein S5. The interaction surface between S4 and S5 is involved in control of translational fidelity.

In terms of biological role, one of the primary rRNA binding proteins, it binds directly to 16S rRNA where it nucleates assembly of the body of the 30S subunit. Its function is as follows. With S5 and S12 plays an important role in translational accuracy. The sequence is that of Small ribosomal subunit protein uS4 from Caldicellulosiruptor saccharolyticus (strain ATCC 43494 / DSM 8903 / Tp8T 6331).